We begin with the raw amino-acid sequence, 474 residues long: Bifunctional protein HldE (474 aa).

Positions 1 to 317 (MKLSMPRFDQ…RRAIQRSEGS (317 aa)) are ribokinase. An ATP-binding site is contributed by 194 to 197 (NLSE). D263 is a catalytic residue. The tract at residues 343 to 474 (FTNGCFDILH…AIVEKIRNNE (132 aa)) is cytidylyltransferase.

It in the N-terminal section; belongs to the carbohydrate kinase PfkB family. In the C-terminal section; belongs to the cytidylyltransferase family. In terms of assembly, homodimer.

It catalyses the reaction D-glycero-beta-D-manno-heptose 7-phosphate + ATP = D-glycero-beta-D-manno-heptose 1,7-bisphosphate + ADP + H(+). It carries out the reaction D-glycero-beta-D-manno-heptose 1-phosphate + ATP + H(+) = ADP-D-glycero-beta-D-manno-heptose + diphosphate. Its pathway is nucleotide-sugar biosynthesis; ADP-L-glycero-beta-D-manno-heptose biosynthesis; ADP-L-glycero-beta-D-manno-heptose from D-glycero-beta-D-manno-heptose 7-phosphate: step 1/4. The protein operates within nucleotide-sugar biosynthesis; ADP-L-glycero-beta-D-manno-heptose biosynthesis; ADP-L-glycero-beta-D-manno-heptose from D-glycero-beta-D-manno-heptose 7-phosphate: step 3/4. Its function is as follows. Catalyzes the phosphorylation of D-glycero-D-manno-heptose 7-phosphate at the C-1 position to selectively form D-glycero-beta-D-manno-heptose-1,7-bisphosphate. Functionally, catalyzes the ADP transfer from ATP to D-glycero-beta-D-manno-heptose 1-phosphate, yielding ADP-D-glycero-beta-D-manno-heptose. This Pseudomonas fluorescens (strain SBW25) protein is Bifunctional protein HldE.